Consider the following 83-residue polypeptide: Small ribosomal subunit protein bS20 (83 aa).

This sequence belongs to the bacterial ribosomal protein bS20 family.

In terms of biological role, binds directly to 16S ribosomal RNA. The protein is Small ribosomal subunit protein bS20 of Lactobacillus delbrueckii subsp. bulgaricus (strain ATCC 11842 / DSM 20081 / BCRC 10696 / JCM 1002 / NBRC 13953 / NCIMB 11778 / NCTC 12712 / WDCM 00102 / Lb 14).